The primary structure comprises 121 residues: MIKGIGLDIVEINRLAHVLSRQPRLPERILTLNEQDIFHALSEKRQLEFLAGRFAAKEAFAKAYGTGIGRHLSFHDIEIQKDEHGKPFIKSEKTKDDQVHVSITHTKEYAAAQVLIERLSS.

Aspartate 8 and glutamate 58 together coordinate Mg(2+).

It belongs to the P-Pant transferase superfamily. AcpS family. It depends on Mg(2+) as a cofactor.

Its subcellular location is the cytoplasm. It carries out the reaction apo-[ACP] + CoA = holo-[ACP] + adenosine 3',5'-bisphosphate + H(+). In terms of biological role, transfers the 4'-phosphopantetheine moiety from coenzyme A to a Ser of acyl-carrier-protein. This Bacillus pumilus (strain SAFR-032) protein is Holo-[acyl-carrier-protein] synthase.